Reading from the N-terminus, the 704-residue chain is Myb-related protein B (704 aa).

HTH myb-type domains are found at residues 26–77 (RDNR…LRVL), 78–133 (NPDL…NPEV), and 134–184 (KKSC…KRKV). Positions 54–77 (WKFLASHFPNRTDQQCQYRWLRVL) form a DNA-binding region, H-T-H motif. A Glycyl lysine isopeptide (Lys-Gly) (interchain with G-Cter in SUMO2) cross-link involves residue Lys-104. 2 consecutive DNA-binding regions (H-T-H motif) follow at residues 106–129 (WTLI…HNHL) and 157–180 (WAEI…NSTI). Lys-197 participates in a covalent cross-link: Glycyl lysine isopeptide (Lys-Gly) (interchain with G-Cter in SUMO2). Thr-267 carries the phosphothreonine modification. Lys-275 is covalently cross-linked (Glycyl lysine isopeptide (Lys-Gly) (interchain with G-Cter in SUMO2)). Ser-282 is modified (phosphoserine). The tract at residues 325–412 (LSKFDLPEEP…GSGIGTPPSV (88 aa)) is disordered. Positions 339–366 (SVVSSPVQPQTSQQQQEEALQSSQQAAT) are enriched in low complexity. Residue Ser-396 is modified to Phosphoserine. Lys-414 participates in a covalent cross-link: Glycyl lysine isopeptide (Lys-Gly) (interchain with G-Cter in SUMO2). Phosphothreonine; by CDK2 occurs at positions 443 and 447. Residues Lys-450 and Lys-485 each participate in a glycyl lysine isopeptide (Lys-Gly) (interchain with G-Cter in SUMO2) cross-link. Thr-490 and Thr-497 each carry phosphothreonine; by CDK2. Residues Lys-502 and Lys-513 each participate in a glycyl lysine isopeptide (Lys-Gly) (interchain with G-Cter in SUMO2) cross-link. Thr-524 bears the Phosphothreonine; by CDK2 mark. Glycyl lysine isopeptide (Lys-Gly) (interchain with G-Cter in SUMO2) cross-links involve residues Lys-527, Lys-537, and Lys-550. Phosphoserine; by CDK2 is present on Ser-581. Glycyl lysine isopeptide (Lys-Gly) (interchain with G-Cter in SUMO2) cross-links involve residues Lys-588 and Lys-600. The interval 603 to 626 (SSTMPKPLSLPTSVTPSSCGFTSP) is disordered. Low complexity predominate over residues 607–620 (PKPLSLPTSVTPSS). Glycyl lysine isopeptide (Lys-Gly) (interchain with G-Cter in SUMO2) cross-links involve residues Lys-629, Lys-643, and Lys-652.

In terms of assembly, component of the DREAM complex (also named LINC complex) at least composed of E2F4, E2F5, LIN9, LIN37, LIN52, LIN54, MYBL1, MYBL2, RBL1, RBL2, RBBP4, TFDP1 and TFDP2. The complex exists in quiescent cells where it represses cell cycle-dependent genes. It dissociates in S phase when LIN9, LIN37, LIN52 and LIN54 form a subcomplex that binds to MYBL2. Interacts with CCNF (via the Cyclin N-terminal domain). Post-translationally, phosphorylated by cyclin A/CDK2 during S-phase. Phosphorylation at Thr-524 is probably involved in transcriptional activity.

It is found in the nucleus. Transcription factor involved in the regulation of cell survival, proliferation, and differentiation. Transactivates the expression of the CLU gene. This Mus musculus (Mouse) protein is Myb-related protein B (Mybl2).